The following is a 275-amino-acid chain: U6 snRNA phosphodiesterase 1 (275 aa).

A disordered region spans residues 1-25 (MEFLKHYEDDEDQDDENNTKDENVN). Histidine 122 functions as the Proton acceptor in the catalytic mechanism. AMP contacts are provided by residues 122–124 (HIS), tyrosine 206, and 208–214 (NPEPHLS). UMP-binding positions include tyrosine 206 and 210 to 214 (EPHLS). The active-site Proton donor is histidine 212.

The protein belongs to the 2H phosphoesterase superfamily. USB1 family.

The protein localises to the nucleus. The catalysed reaction is a 3'-end uridylyl-uridine-RNA = a 3'-end 2',3'-cyclophospho-uridine-RNA + uridine. Its function is as follows. 3'-5' RNA exonuclease that trims the 3' end of oligo(U) tracts of the pre-U6 small nuclear RNA (snRNA) molecule, leading to the formation of a mature U6 snRNA 3' end-terminated with a 2',3'-cyclic phosphate. Participates in the U6 snRNA 3' end processing that prevents U6 snRNA degradation. The chain is U6 snRNA phosphodiesterase 1 from Dictyostelium discoideum (Social amoeba).